The chain runs to 335 residues: Holliday junction branch migration complex subunit RuvB (335 aa).

Residues 1 to 183 are large ATPase domain (RuvB-L); that stretch reads MDERIISSET…FGVIDHLEFY (183 aa). ATP-binding positions include Leu22, Arg23, Gly64, Lys67, Thr68, Thr69, 130 to 132, Arg173, Tyr183, and Arg220; that span reads EDY. Thr68 provides a ligand contact to Mg(2+). The tract at residues 184–254 is small ATPAse domain (RuvB-S); sequence TEEQLTEIVL…LAKEALTLLQ (71 aa). Residues 257–335 are head domain (RuvB-H); that stretch reads PRGLDTIDQK…HLGISYEKEV (79 aa). Residues Arg293, Arg312, and Arg317 each coordinate DNA.

The protein belongs to the RuvB family. As to quaternary structure, homohexamer. Forms an RuvA(8)-RuvB(12)-Holliday junction (HJ) complex. HJ DNA is sandwiched between 2 RuvA tetramers; dsDNA enters through RuvA and exits via RuvB. An RuvB hexamer assembles on each DNA strand where it exits the tetramer. Each RuvB hexamer is contacted by two RuvA subunits (via domain III) on 2 adjacent RuvB subunits; this complex drives branch migration. In the full resolvosome a probable DNA-RuvA(4)-RuvB(12)-RuvC(2) complex forms which resolves the HJ.

It is found in the cytoplasm. It catalyses the reaction ATP + H2O = ADP + phosphate + H(+). In terms of biological role, the RuvA-RuvB-RuvC complex processes Holliday junction (HJ) DNA during genetic recombination and DNA repair, while the RuvA-RuvB complex plays an important role in the rescue of blocked DNA replication forks via replication fork reversal (RFR). RuvA specifically binds to HJ cruciform DNA, conferring on it an open structure. The RuvB hexamer acts as an ATP-dependent pump, pulling dsDNA into and through the RuvAB complex. RuvB forms 2 homohexamers on either side of HJ DNA bound by 1 or 2 RuvA tetramers; 4 subunits per hexamer contact DNA at a time. Coordinated motions by a converter formed by DNA-disengaged RuvB subunits stimulates ATP hydrolysis and nucleotide exchange. Immobilization of the converter enables RuvB to convert the ATP-contained energy into a lever motion, pulling 2 nucleotides of DNA out of the RuvA tetramer per ATP hydrolyzed, thus driving DNA branch migration. The RuvB motors rotate together with the DNA substrate, which together with the progressing nucleotide cycle form the mechanistic basis for DNA recombination by continuous HJ branch migration. Branch migration allows RuvC to scan DNA until it finds its consensus sequence, where it cleaves and resolves cruciform DNA. This chain is Holliday junction branch migration complex subunit RuvB, found in Listeria welshimeri serovar 6b (strain ATCC 35897 / DSM 20650 / CCUG 15529 / CIP 8149 / NCTC 11857 / SLCC 5334 / V8).